Reading from the N-terminus, the 908-residue chain is Zinc finger and BTB domain-containing protein 41 (908 aa).

The segment at 38-59 is disordered; sequence TQAPERPTPEAAQRCQELPPSP. Residues 89 to 153 form the BTB domain; the sequence is CDLLIIVEGK…LYTSEFFVYK (65 aa). Residues 208 to 231 form a C2H2-type 1 zinc finger; that stretch reads HQCKFCSRHFCYKKSLENHLAKTH. Over residues 252-261 the composition is skewed to basic residues; it reads RRSKRNRKCP. The tract at residues 252–344 is disordered; that stretch reads RRSKRNRKCP…EAGDSAGSIH (93 aa). Positions 267 to 276 are enriched in acidic residues; that stretch reads TSDDEQESGD. The span at 279–296 shows a compositional bias: basic and acidic residues; it reads DNLHQESSEKERSDRNDS. Over residues 297–336 the composition is skewed to acidic residues; it reads EDPGSEYNAEDEELEEEVSDEDSDTEQSDKDNDAEEEPEA. C2H2-type zinc fingers lie at residues 360-382, 388-410, 421-444, 462-484, 490-513, 517-540, 546-568, 574-596, 602-624, 630-653, 667-689, 695-717, and 723-746; these read LQCP…TRVH, FECD…RKKH, HKCP…KRFH, WKCD…MILH, FKCT…EKFH, FPCD…ECTH, WTCF…LRIH, HLCS…LRVH, YECD…KKIH, HQCE…KSVH, HQCD…FRTH, YKCQ…LVIH, and FNCQ…DHVH.

It localises to the nucleus. In terms of biological role, may be involved in transcriptional regulation. The protein is Zinc finger and BTB domain-containing protein 41 (Zbtb41) of Mus musculus (Mouse).